A 705-amino-acid chain; its full sequence is Phosphoribosylformylglycinamidine synthase subunit PurL (705 aa).

Residue His32 is part of the active site. An ATP-binding site is contributed by Tyr35. Position 76 (Glu76) interacts with Mg(2+). Substrate contacts are provided by residues 77–80 and Arg99; that span reads SHNH. His78 (proton acceptor) is an active-site residue. Asp100 lines the Mg(2+) pocket. Gln224 contacts substrate. Asp252 is a binding site for Mg(2+). 296 to 298 provides a ligand contact to substrate; the sequence is ESQ. ATP is bound by residues Asp471 and Gly508. Position 509 (Asn509) interacts with Mg(2+). A substrate-binding site is contributed by Ser511.

Belongs to the FGAMS family. Monomer. Part of the FGAM synthase complex composed of 1 PurL, 1 PurQ and 2 PurS subunits.

It localises to the cytoplasm. The enzyme catalyses N(2)-formyl-N(1)-(5-phospho-beta-D-ribosyl)glycinamide + L-glutamine + ATP + H2O = 2-formamido-N(1)-(5-O-phospho-beta-D-ribosyl)acetamidine + L-glutamate + ADP + phosphate + H(+). It functions in the pathway purine metabolism; IMP biosynthesis via de novo pathway; 5-amino-1-(5-phospho-D-ribosyl)imidazole from N(2)-formyl-N(1)-(5-phospho-D-ribosyl)glycinamide: step 1/2. In terms of biological role, part of the phosphoribosylformylglycinamidine synthase complex involved in the purines biosynthetic pathway. Catalyzes the ATP-dependent conversion of formylglycinamide ribonucleotide (FGAR) and glutamine to yield formylglycinamidine ribonucleotide (FGAM) and glutamate. The FGAM synthase complex is composed of three subunits. PurQ produces an ammonia molecule by converting glutamine to glutamate. PurL transfers the ammonia molecule to FGAR to form FGAM in an ATP-dependent manner. PurS interacts with PurQ and PurL and is thought to assist in the transfer of the ammonia molecule from PurQ to PurL. In Pyrococcus abyssi (strain GE5 / Orsay), this protein is Phosphoribosylformylglycinamidine synthase subunit PurL.